The primary structure comprises 911 residues: Translation initiation factor IF-2 (911 aa).

Composition is skewed to basic and acidic residues over residues 80-94 (LEEQSRKTYEKEQQL) and 101-113 (RPERAAAKPRTEV). Disordered regions lie at residues 80 to 142 (LEEQ…VSEP), 153 to 172 (VKSPVEETSETVAEKNDVEG), and 195 to 309 (SSLG…KMRK). The segment covering 214–256 (KEQADELKDEFDIKAKEGGKEREAGGESRKPVKKGSEETKKTT) has biased composition (basic and acidic residues). Basic residues predominate over residues 262-272 (AKKKKGKKKKK). A compositionally biased stretch (basic and acidic residues) spans 273 to 284 (PEVDEKTIEKNI). Positions 286-300 (STISGMDDTSGSGSS) are enriched in low complexity. The tr-type G domain maps to 408 to 578 (IRPPVVTIMG…LTEAEIRELK (171 aa)). The segment at 417-424 (GHVDHGKT) is G1. 417–424 (GHVDHGKT) contributes to the GTP binding site. Positions 442 to 446 (GITQH) are G2. The interval 464–467 (DTPG) is G3. GTP is bound by residues 464–468 (DTPGH) and 518–521 (NKID). Residues 518 to 521 (NKID) form a G4 region. The G5 stretch occupies residues 554–556 (SAK).

This sequence belongs to the TRAFAC class translation factor GTPase superfamily. Classic translation factor GTPase family. IF-2 subfamily.

The protein localises to the cytoplasm. In terms of biological role, one of the essential components for the initiation of protein synthesis. Protects formylmethionyl-tRNA from spontaneous hydrolysis and promotes its binding to the 30S ribosomal subunits. Also involved in the hydrolysis of GTP during the formation of the 70S ribosomal complex. This is Translation initiation factor IF-2 from Chlorobium phaeobacteroides (strain BS1).